Reading from the N-terminus, the 224-residue chain is Pyridoxine/pyridoxamine 5'-phosphate oxidase (224 aa).

Residues 14–17 (REHY) and Lys-76 each bind substrate. FMN contacts are provided by residues 71 to 76 (RTVLMK), 86 to 87 (YT), Arg-92, Lys-93, and Gln-115. Substrate is bound by residues Tyr-133, Arg-137, and Ser-141. Residues 150–151 (QS) and Trp-196 contribute to the FMN site. 202 to 204 (RLH) is a substrate binding site. Arg-206 is an FMN binding site.

Belongs to the pyridoxamine 5'-phosphate oxidase family. As to quaternary structure, homodimer. FMN is required as a cofactor.

The enzyme catalyses pyridoxamine 5'-phosphate + O2 + H2O = pyridoxal 5'-phosphate + H2O2 + NH4(+). It carries out the reaction pyridoxine 5'-phosphate + O2 = pyridoxal 5'-phosphate + H2O2. It functions in the pathway cofactor metabolism; pyridoxal 5'-phosphate salvage; pyridoxal 5'-phosphate from pyridoxamine 5'-phosphate: step 1/1. It participates in cofactor metabolism; pyridoxal 5'-phosphate salvage; pyridoxal 5'-phosphate from pyridoxine 5'-phosphate: step 1/1. In terms of biological role, catalyzes the oxidation of either pyridoxine 5'-phosphate (PNP) or pyridoxamine 5'-phosphate (PMP) into pyridoxal 5'-phosphate (PLP). This is Pyridoxine/pyridoxamine 5'-phosphate oxidase from Streptomyces avermitilis (strain ATCC 31267 / DSM 46492 / JCM 5070 / NBRC 14893 / NCIMB 12804 / NRRL 8165 / MA-4680).